The chain runs to 448 residues: Noelin-2 (448 aa).

Residues 1-14 form the signal peptide; it reads MRKLRQTGTTIAGG. Coiled-coil stretches lie at residues 52 to 79 and 130 to 187; these read RDGR…LELR and LEQY…AQKL. N-linked (GlcNAc...) asparagine glycosylation is found at asparagine 68, asparagine 149, asparagine 269, asparagine 304, asparagine 393, and asparagine 435. The region spanning 188–440 is the Olfactomedin-like domain; sequence GCGKLTGVSN…QVLYNVTLFH (253 aa). Cysteine 189 and cysteine 371 are oxidised to a cystine.

In terms of assembly, peripherally associated with AMPAR complex. AMPAR complex consists of an inner core made of 4 pore-forming GluA/GRIA proteins (GRIA1, GRIA2, GRIA3 and GRIA4) and 4 major auxiliary subunits arranged in a twofold symmetry. One of the two pairs of distinct binding sites is occupied either by CNIH2, CNIH3 or CACNG2, CACNG3. The other harbors CACNG2, CACNG3, CACNG4, CACNG8 or GSG1L. This inner core of AMPAR complex is complemented by outer core constituents binding directly to the GluA/GRIA proteins at sites distinct from the interaction sites of the inner core constituents. Outer core constituents include at least PRRT1, PRRT2, CKAMP44/SHISA9, FRRS1L and NRN1. The proteins of the inner and outer core serve as a platform for other, more peripherally associated AMPAR constituents, including OLFM2. Alone or in combination, these auxiliary subunits control the gating and pharmacology of the AMPAR complex and profoundly impact their biogenesis and protein processing. Interacts with GRIA2. Interacts with OLFM1 and OLFM3. Interacts with SRF; the interaction promotes dissociation of SRF from the transcriptional repressor HEY2. Interacts with RUNX2. In terms of tissue distribution, expressed in the brain (at protein level). In the developing eye, first detected at 12 dpc in the retinal pigmented epithelium and preferentially expressed in differentiating retinal ganglion cells between 15 and 18 dpc. In the brain, expression is detected mainly in the olfactory bulb, cortex, piriform cortex, olfactory trabeculae, and inferior and superior colliculus. In the adult eye, expression is detected mainly in retinal ganglion cells. Expressed in carotid arteries.

The protein localises to the secreted. The protein resides in the synapse. It localises to the membrane. It is found in the nucleus. Its subcellular location is the cytoplasm. Its function is as follows. Involved in transforming growth factor beta (TGF-beta)-induced smooth muscle differentiation. TGF-beta induces expression and nuclear translocation of OLFM2 where it binds to SRF, causing its dissociation from the transcriptional repressor HEY2/HERP1 and facilitating binding of SRF to target genes. Plays a role in AMPAR complex organization. Is a regulator of vascular smooth-muscle cell (SMC) phenotypic switching, that acts by promoting RUNX2 and inhibiting MYOCD binding to SRF. SMC phenotypic switching is the process through which vascular SMCs undergo transition between a quiescent contractile phenotype and a proliferative synthetic phenotype in response to pathological stimuli. SMC phenotypic plasticity is essential for vascular development and remodeling. This Mus musculus (Mouse) protein is Noelin-2 (Olfm2).